An 825-amino-acid polypeptide reads, in one-letter code: Neuroligin-3 (825 aa).

An N-terminal signal peptide occupies residues 1–34; sequence MWLQPSLSLSPTPTVGRSLCLTLGFLSLVLRAST. At 35 to 686 the chain is on the extracellular side; sequence QAPAPTVNTH…NPRDYSTELS (652 aa). Asn95 is a glycosylation site (N-linked (GlcNAc...) asparagine). Cys103 and Cys138 form a disulfide bridge. Positions 151-172 are disordered; it reads SGAKKQGEDLADNDGDEDEDIR. The span at 159–171 shows a compositional bias: acidic residues; sequence DLADNDGDEDEDI. 2 cysteine pairs are disulfide-bonded: Cys317–Cys328 and Cys487–Cys521. Asn522 carries N-linked (GlcNAc...) asparagine glycosylation. 2 stretches are compositionally biased toward polar residues: residues 622-633 and 654-666; these read TKVPPPDTTHSS and AYSN…SWNG. The tract at residues 622–668 is disordered; it reads TKVPPPDTTHSSHITRRPNGKTWSTKRPAISPAYSNENAPGSWNGDQ. The helical transmembrane segment at 687-707 threads the bilayer; sequence VTIAVGASLLFLNVLAFAALY. Topologically, residues 708–825 are cytoplasmic; sequence YRKDKRRQEP…LPHSHSTTRV (118 aa). Ser722 carries the phosphoserine modification. At Tyr769 the chain carries Phosphotyrosine.

This sequence belongs to the type-B carboxylesterase/lipase family. In terms of assembly, homodimer, and heterodimer with NLGN1 and NLGN2. Interacts with neurexins NRXN1, NRXN2 and NRXN3. Interaction with neurexins is mediated by heparan sulfate glycan modification on neurexin. Interacts (via its C-terminus) with DLG4/PSD-95 (via PDZ domain 3). In terms of tissue distribution, brain and arteries (at protein level). Detected in heart, brain, spleen, lung, liver, skeletal muscle, kidney and testis. Expressed in olfactory bulb and olfactory epithelium. Found in olfactory ensheathing glia but not in olfactory neurons, and in developing peripheral glia.

The protein localises to the cell membrane. Its subcellular location is the synapse. Its function is as follows. Cell surface protein involved in cell-cell-interactions via its interactions with neurexin family members. Plays a role in synapse function and synaptic signal transmission, and probably mediates its effects by recruiting and clustering other synaptic proteins. May promote the initial formation of synapses, but is not essential for this. May also play a role in glia-glia or glia-neuron interactions in the developing peripheral nervous system. In Mus musculus (Mouse), this protein is Neuroligin-3 (Nlgn3).